A 488-amino-acid chain; its full sequence is Prostaglandin E2 receptor EP4 subtype (488 aa).

Over 1–19 the chain is Extracellular; it reads MSIPGVNASFSSTPERLNS. Residue N7 is glycosylated (N-linked (GlcNAc...) asparagine). Residues 20–43 form a helical membrane-spanning segment; sequence PVTIPAVMFIFGVVGNLVAIVVLC. Residues 44-55 lie on the Cytoplasmic side of the membrane; it reads KSRKEQKETTFY. A helical membrane pass occupies residues 56 to 79; it reads TLVCGLAVTDLLGTLLVSPVTIAT. Residues 80–96 are Extracellular-facing; the sequence is YMKGQWPGDQALCDYST. The cysteines at positions 92 and 170 are disulfide-linked. The chain crosses the membrane as a helical span at residues 97 to 115; it reads FILLFFGLSGLSIICAMSI. Residues 116-135 are Cytoplasmic-facing; it reads ERYLAINHAYFYSHYVDKRL. The chain crosses the membrane as a helical span at residues 136 to 160; the sequence is AGLTLFAVYASNVLFCALPNMGLGR. At 161–184 the chain is on the extracellular side; it reads SERQYPGTWCFIDWTTNVTAYAAF. A helical membrane pass occupies residues 185-211; the sequence is SYMYAGFSSFLILATVLCNVLVCGALL. The Cytoplasmic portion of the chain corresponds to 212-270; sequence RMLRQFMRRTSLGTEQHHAAAAAAVASVACRGHAAASPALQRLSDFRRRRSFRRIAGAE. A helical transmembrane segment spans residues 271 to 298; it reads IQMVILLIATSLVVLICSIPLVVRVFIN. Over 299-315 the chain is Extracellular; sequence QLYQPSVVKDISRNPDL. A helical membrane pass occupies residues 316–335; the sequence is QAIRIASVNPILDPWIYILL. The Cytoplasmic portion of the chain corresponds to 336-488; it reads RKTVLSKAIE…ETLKLSEKCI (153 aa). Positions 358–380 are disordered; it reads GRDGSAQHCSESRRTSSAMSGHS. Phosphoserine is present on residues S377, S380, S382, and S385.

Belongs to the G-protein coupled receptor 1 family. As to quaternary structure, interacts with FEM1A. Post-translationally, phosphorylation mediates agonist-mediated desensitization by promoting cytoplasmic retention.

It localises to the cell membrane. Its function is as follows. Receptor for prostaglandin E2 (PGE2). The activity of this receptor is mediated by G(s) proteins that stimulate adenylate cyclase. Has a relaxing effect on smooth muscle. May play an important role in regulating renal hemodynamics, intestinal epithelial transport, adrenal aldosterone secretion, and uterine function. This chain is Prostaglandin E2 receptor EP4 subtype (Ptger4), found in Rattus norvegicus (Rat).